The primary structure comprises 274 residues: Mitogen-activated protein kinase 4 (274 aa).

Residues Gly-1–Val-8 and Lys-23 each bind ATP. The 274-residue stretch at Gly-1–Arg-274 folds into the Protein kinase domain. The active-site Proton acceptor is Asp-123. A Phosphoserine modification is found at Ser-160. An SEG motif motif is present at residues Ser-160–Gly-162.

Belongs to the protein kinase superfamily. CMGC Ser/Thr protein kinase family. MAP kinase subfamily. As to quaternary structure, homodimer. Heterodimer with ERK3/MAPK6. Interacts with MAPKAPK5. Mg(2+) serves as cofactor. In terms of processing, phosphorylated by PAK1, PAK2 and PAK3 in the activation loop resulting in catalytic activation. Phosphorylated by MAPKAPK5 at other sites. As to expression, exclusively detected in the brain, where expression is restricted to the choroid plexus and hippocampus, and to a lesser extent in lung.

It is found in the cytoplasm. Its subcellular location is the nucleus. It carries out the reaction L-seryl-[protein] + ATP = O-phospho-L-seryl-[protein] + ADP + H(+). The enzyme catalyses L-threonyl-[protein] + ATP = O-phospho-L-threonyl-[protein] + ADP + H(+). Its activity is regulated as follows. Activated by phosphorylation in the activation loop. Functionally, atypical MAPK protein. Phosphorylates microtubule-associated protein 2 (MAP2) and MAPKAPK5. The precise role of the complex formed with MAPKAPK5 is still unclear, but the complex follows a complex set of phosphorylation events: upon interaction with atypical MAPKAPK5, ERK4/MAPK4 is phosphorylated and then mediates phosphorylation and activation of MAPKAPK5, which in turn phosphorylates ERK4/MAPK4. May promote entry in the cell cycle. In Rattus norvegicus (Rat), this protein is Mitogen-activated protein kinase 4 (Mapk4).